Reading from the N-terminus, the 104-residue chain is uncharacterized protein (104 aa).

2 consecutive transmembrane segments (helical) span residues 45-65 (LYGI…IGVF) and 70-90 (LYLS…AKGL).

The protein resides in the membrane. This is an uncharacterized protein from Saccharomyces cerevisiae (strain ATCC 204508 / S288c) (Baker's yeast).